A 560-amino-acid polypeptide reads, in one-letter code: MRPEPGGCCCRRPMRANGCVKNGEVRNGYLRSSTATIAAAGQIHHITENGGLYKRPFNEAFEETPMLVAVLTYVGYGVLTLFGYLRDFLRHWRIEKCHHATEREEQKDFVSLYQDFENFYTRNLYMRIRDNWNRPICSVPGAKVDIMERQSHDYNWSFKYTGNIIKGVINMGSYNYLGFARNTGSCQEAAAEVLKTYGAGVCSTRQEIGNLDKHEELEKLVARFLGVEAALTYGMGFATNSMNIPALVGKGCLILSDELNHASLVLGARLSGATIRIFKHNNMQSLEKLLKDAIVYGQPRTRRPWKKILILVEGIYSMEGSIVRLPEVIALKKKYKAYLYLDEAHSIGALGPSGRGVVDYFGLDPEDVDVMMGTFTKSFGASGGYIGGKKELIDYLRTHSHSAVYATSMSPPVMEQIITSMKCIMGQDGTSLGKECIQQLAENTRYFRRRLKEMGFIIYGNEDSPVVPLMLYMPAKIGAFGREMLKRNIGVVVVGFPATPIIESRARFCLSAAHTKEILDTALKEIDEVGDLLQLKYSRHRPLPLLDRPFDETTYEETED.

Residues 65-85 (PMLVAVLTYVGYGVLTLFGYL) traverse the membrane as a helical segment. An N6-(pyridoxal phosphate)lysine modification is found at K377.

It belongs to the class-II pyridoxal-phosphate-dependent aminotransferase family. Component of the serine palmitoyltransferase (SPT) complex, which is composed of SPTLC1, SPTLC2 or SPTLC3 and SPTSSA or SPTSSB. The heterodimer consisting of SPTLC1 and SPTLC2/SPTLC3 forms the catalytic core of the enzyme, while SPTSSA or SPTSSB subunits determine substrate specificity. SPT also interacts with ORMDL proteins, especially ORMDL3, which negatively regulate SPT activity in the presence of ceramides. Forms dimers of heterodimers with SPTLC1. The cofactor is pyridoxal 5'-phosphate. Expressed in astrocytes.

The protein resides in the endoplasmic reticulum membrane. The catalysed reaction is L-serine + hexadecanoyl-CoA + H(+) = 3-oxosphinganine + CO2 + CoA. It carries out the reaction octadecanoyl-CoA + L-serine + H(+) = 3-oxoeicosasphinganine + CO2 + CoA. The protein operates within lipid metabolism; sphingolipid metabolism. SPT complex catalytic activity is negatively regulated by ORMDL proteins, including ORMDL3, in the presence of ceramides. This mechanism allows to maintain ceramide levels at sufficient concentrations for the production of complex sphingolipids, but which prevents the accumulation of ceramides to levels that trigger apoptosis. In terms of biological role, component of the serine palmitoyltransferase multisubunit enzyme (SPT) that catalyzes the initial and rate-limiting step in sphingolipid biosynthesis by condensing L-serine and activated acyl-CoA (most commonly palmitoyl-CoA) to form long-chain bases. The SPT complex is composed of SPTLC1, SPTLC2 or SPTLC3 and SPTSSA or SPTSSB. Within this complex, the heterodimer consisting of SPTLC1 and SPTLC2/SPTLC3 forms the catalytic core. The composition of the serine palmitoyltransferase (SPT) complex determines the substrate preference. The SPTLC1-SPTLC2-SPTSSA complex shows a strong preference for C16-CoA substrate, while the SPTLC1-SPTLC3-SPTSSA isozyme uses both C14-CoA and C16-CoA as substrates, with a slight preference for C14-CoA. The SPTLC1-SPTLC2-SPTSSB complex shows a strong preference for C18-CoA substrate, while the SPTLC1-SPTLC3-SPTSSB isozyme displays an ability to use a broader range of acyl-CoAs, without apparent preference. Crucial for adipogenesis. The polypeptide is Serine palmitoyltransferase 2 (Rattus norvegicus (Rat)).